We begin with the raw amino-acid sequence, 87 residues long: MKSKISEYTEKEFLEFVKDIYTNNKKKFPTEESHIQAVLEFKKLTEHPSGSDLLYYPNENREDSPAGVVKEVKEWRASKGLPGFKAG.

This sequence belongs to the colicins ColE2/ColE8/ColE9 and pyocins S1/S2 family.

The chain is Pyocin-S2 immunity protein (imm2) from Pseudomonas aeruginosa (strain ATCC 15692 / DSM 22644 / CIP 104116 / JCM 14847 / LMG 12228 / 1C / PRS 101 / PAO1).